Consider the following 94-residue polypeptide: UPF0298 protein SZO_03600 (94 aa).

It belongs to the UPF0298 family.

Its subcellular location is the cytoplasm. This is UPF0298 protein SZO_03600 from Streptococcus equi subsp. zooepidemicus (strain H70).